A 347-amino-acid chain; its full sequence is Protease HtpX homolog (347 aa).

A run of 3 helical transmembrane segments spans residues Ile8 to Ala28, Ala46 to Val66, and Trp76 to Ala96. A Zn(2+)-binding site is contributed by His174. Glu175 is an active-site residue. A Zn(2+)-binding site is contributed by His178. A run of 2 helical transmembrane segments spans residues Ala185–Val205 and Leu221–Leu241. Position 248 (Glu248) interacts with Zn(2+).

It belongs to the peptidase M48B family. Requires Zn(2+) as cofactor.

The protein resides in the cell membrane. This Pyrobaculum islandicum (strain DSM 4184 / JCM 9189 / GEO3) protein is Protease HtpX homolog.